The following is a 277-amino-acid chain: Small ribosomal subunit protein uS3 (277 aa).

The 69-residue stretch at 43–111 (IRELMSKGMD…QIQLNILEVK (69 aa)) folds into the KH type-2 domain. The disordered stretch occupies residues 217–277 (AAQQAAAPSS…AEANNAEGGK (61 aa)). The span at 245 to 258 (NDRNDRGGRRERDS) shows a compositional bias: basic and acidic residues. Low complexity predominate over residues 259 to 277 (AAAPQQNSAAEANNAEGGK).

This sequence belongs to the universal ribosomal protein uS3 family. In terms of assembly, part of the 30S ribosomal subunit. Forms a tight complex with proteins S10 and S14.

Binds the lower part of the 30S subunit head. Binds mRNA in the 70S ribosome, positioning it for translation. The chain is Small ribosomal subunit protein uS3 from Kocuria rhizophila (strain ATCC 9341 / DSM 348 / NBRC 103217 / DC2201).